A 44-amino-acid chain; its full sequence is Defensin-like peptide (44 aa).

Intrachain disulfides connect Cys-7/Cys-32, Cys-18/Cys-40, and Cys-22/Cys-42.

In terms of tissue distribution, hemolymph.

Its subcellular location is the secreted. Has antibacterial activity against the Gram-positive bacterium S.lutea (MIC=1.9 uM). Lacks antibacterial activity against the Gram-positive bacteria L.monocytogenes and M.luteus, and the Gram-negative bacteria E.coli D31, E.coli ATCC 25922, and S.typhimurium. Has antifungal activity against A.niger (MIC=2.9 uM), C.albicans (MIC=2.9 uM), C.fructus (MIC=2.9 uM), C.wickerhamii (MIC=2.9 uM), P.pastoris (MIC=2.9 uM), P.stiptis (MIC=2.9 uM), P.tannophilus (MIC=2.9 uM), T.harzianum (MIC=2.9 uM), and Z.marxianus (MIC=2.9 uM), but lacks antifungal activity against C.albidus, F.oxysporum, and S.cerevisiae. In Galleria mellonella (Greater wax moth), this protein is Defensin-like peptide.